The sequence spans 122 residues: MSVKVEKKTDSYLKDTIQKLLERSRESGSVFWRDIAIRLSSSRKNYATVNLGKLQRIASDDDIIVIPGYLLSSGVFNKKIKVSAFKISEKALKKLNDAGSEFVNLVDLASENPKGTNIKIIR.

Belongs to the eukaryotic ribosomal protein eL18 family.

This Picrophilus torridus (strain ATCC 700027 / DSM 9790 / JCM 10055 / NBRC 100828 / KAW 2/3) protein is Large ribosomal subunit protein eL18.